Here is a 508-residue protein sequence, read N- to C-terminus: Photosystem II CP47 reaction center protein (508 aa).

A run of 6 helical transmembrane segments spans residues 21–36 (AVHI…WAGS), 101–115 (IVFS…IWHW), 140–156 (GIHL…FGAF), 203–218 (IAAG…FHLS), 237–252 (VLSS…AFVV), and 457–472 (TFAL…HGAR).

The protein belongs to the PsbB/PsbC family. PsbB subfamily. As to quaternary structure, PSII is composed of 1 copy each of membrane proteins PsbA, PsbB, PsbC, PsbD, PsbE, PsbF, PsbH, PsbI, PsbJ, PsbK, PsbL, PsbM, PsbT, PsbX, PsbY, PsbZ, Psb30/Ycf12, at least 3 peripheral proteins of the oxygen-evolving complex and a large number of cofactors. It forms dimeric complexes. Requires Binds multiple chlorophylls. PSII binds additional chlorophylls, carotenoids and specific lipids. as cofactor.

It localises to the plastid. Its subcellular location is the chloroplast thylakoid membrane. Its function is as follows. One of the components of the core complex of photosystem II (PSII). It binds chlorophyll and helps catalyze the primary light-induced photochemical processes of PSII. PSII is a light-driven water:plastoquinone oxidoreductase, using light energy to abstract electrons from H(2)O, generating O(2) and a proton gradient subsequently used for ATP formation. This is Photosystem II CP47 reaction center protein from Lolium perenne (Perennial ryegrass).